The sequence spans 419 residues: N-acylneuraminate cytidylyltransferase (419 aa).

The protein belongs to the CMP-NeuNAc synthase family. Monomer. May form aggregates. Mg(2+) is required as a cofactor. Requires Mn(2+) as cofactor.

The protein resides in the cytoplasm. The enzyme catalyses an N-acylneuraminate + CTP = a CMP-N-acyl-beta-neuraminate + diphosphate. Inhibited by the CTP analogs 5-mercuri-CTP and CTP-2',3'-dialdehyde. Functionally, catalyzes the formation of CMP-N-acetylneuraminic acid (CMP-NeuNAc), which is essential for the formation of the capsule. In Escherichia coli O18:K1:H7 (strain RS218 / NMEC), this protein is N-acylneuraminate cytidylyltransferase (neuA).